Consider the following 149-residue polypeptide: 3-dehydroquinate dehydratase (149 aa).

The active-site Proton acceptor is the tyrosine 26. Substrate-binding residues include asparagine 77, histidine 83, and aspartate 90. The active-site Proton donor is histidine 103. Substrate is bound by residues 104 to 105 (LS) and arginine 114.

This sequence belongs to the type-II 3-dehydroquinase family. As to quaternary structure, homododecamer.

It carries out the reaction 3-dehydroquinate = 3-dehydroshikimate + H2O. The protein operates within metabolic intermediate biosynthesis; chorismate biosynthesis; chorismate from D-erythrose 4-phosphate and phosphoenolpyruvate: step 3/7. In terms of biological role, catalyzes a trans-dehydration via an enolate intermediate. In Haemophilus influenzae (strain 86-028NP), this protein is 3-dehydroquinate dehydratase.